Here is a 181-residue protein sequence, read N- to C-terminus: TATA-box-binding protein (181 aa).

2 tandem repeats follow at residues 8–84 (IENI…VDMM) and 99–175 (IQNI…KARL).

Belongs to the TBP family.

Its function is as follows. General factor that plays a role in the activation of archaeal genes transcribed by RNA polymerase. Binds specifically to the TATA box promoter element which lies close to the position of transcription initiation. The polypeptide is TATA-box-binding protein (tbp) (Methanothermobacter thermautotrophicus (strain ATCC 29096 / DSM 1053 / JCM 10044 / NBRC 100330 / Delta H) (Methanobacterium thermoautotrophicum)).